The following is an 82-amino-acid chain: Small ribosomal subunit protein eS27 (82 aa).

Zn(2+) contacts are provided by C37, C40, C56, and C59.

Belongs to the eukaryotic ribosomal protein eS27 family. As to quaternary structure, component of the small ribosomal subunit. Mature ribosomes consist of a small (40S) and a large (60S) subunit. The 40S subunit contains about 32 different proteins and 1 molecule of RNA (18S). The 60S subunit contains 45 different proteins and 3 molecules of RNA (25S, 5.8S and 5S). It depends on Zn(2+) as a cofactor.

The protein resides in the cytoplasm. In terms of biological role, component of the ribosome, a large ribonucleoprotein complex responsible for the synthesis of proteins in the cell. The small ribosomal subunit (SSU) binds messenger RNAs (mRNAs) and translates the encoded message by selecting cognate aminoacyl-transfer RNA (tRNA) molecules. The large subunit (LSU) contains the ribosomal catalytic site termed the peptidyl transferase center (PTC), which catalyzes the formation of peptide bonds, thereby polymerizing the amino acids delivered by tRNAs into a polypeptide chain. The nascent polypeptides leave the ribosome through a tunnel in the LSU and interact with protein factors that function in enzymatic processing, targeting, and the membrane insertion of nascent chains at the exit of the ribosomal tunnel. The protein is Small ribosomal subunit protein eS27 (RPS27) of Candida albicans (strain SC5314 / ATCC MYA-2876) (Yeast).